The primary structure comprises 197 residues: MEAAAARPVIRVAAICGSLRKASYNGGLLRAAAGVCEESIPGLRVDHVDISGLPLLNTDLETADGGFPPAVEAFRDKVRQADCFLFGSPEYNYSIATPLKNALDWASRGQNCWADKPAAIVSAGGGFGGGRSQYHLRQVGVFLDLHFINKPELAVKAFEQPPKFDSDGNLIDAQIRERIKQVLLSLQAFTLRLQKKD.

It belongs to the SsuE family. In terms of assembly, homotetramer. Requires FMN as cofactor.

It carries out the reaction a quinone + NADH + H(+) = a quinol + NAD(+). The catalysed reaction is a quinone + NADPH + H(+) = a quinol + NADP(+). In terms of biological role, the enzyme apparently serves as a quinone reductase in connection with conjugation reactions of hydroquinones involved in detoxification pathways. The chain is Probable NADPH:quinone oxidoreductase 1 from Oryza sativa subsp. japonica (Rice).